Here is a 309-residue protein sequence, read N- to C-terminus: uncharacterized protein (309 aa).

One can recognise an S4 RNA-binding domain in the interval 11–87 (QRLDTFLATL…FPLDILYEDE (77 aa)). Residue Asp-131 is part of the active site.

The protein belongs to the pseudouridine synthase RluA family.

It catalyses the reaction a uridine in RNA = a pseudouridine in RNA. This is an uncharacterized protein from Mycoplasma pneumoniae (strain ATCC 29342 / M129 / Subtype 1) (Mycoplasmoides pneumoniae).